A 456-amino-acid polypeptide reads, in one-letter code: Arginine biosynthesis bifunctional protein ArgJ, mitochondrial (456 aa).

Positions 184, 213, 224, 311, 451, and 456 each coordinate substrate. Catalysis depends on Thr224, which acts as the Nucleophile.

This sequence belongs to the ArgJ family. As to quaternary structure, heterodimer of an alpha and a beta chain. In terms of processing, the alpha and beta chains are autoproteolytically processed from a single precursor protein within the mitochondrion.

The protein localises to the mitochondrion matrix. The catalysed reaction is N(2)-acetyl-L-ornithine + L-glutamate = N-acetyl-L-glutamate + L-ornithine. The enzyme catalyses L-glutamate + acetyl-CoA = N-acetyl-L-glutamate + CoA + H(+). It functions in the pathway amino-acid biosynthesis; L-arginine biosynthesis; L-ornithine and N-acetyl-L-glutamate from L-glutamate and N(2)-acetyl-L-ornithine (cyclic): step 1/1. It participates in amino-acid biosynthesis; L-arginine biosynthesis; N(2)-acetyl-L-ornithine from L-glutamate: step 1/4. Catalyzes two activities which are involved in the cyclic version of arginine biosynthesis: the synthesis of acetylglutamate from glutamate and acetyl-CoA, and of ornithine by transacetylation between acetylornithine and glutamate. The protein is Arginine biosynthesis bifunctional protein ArgJ, mitochondrial of Aspergillus niger (strain ATCC MYA-4892 / CBS 513.88 / FGSC A1513).